Here is a 186-residue protein sequence, read N- to C-terminus: MTVADAKKTADQKMQKSIETLKADLAKVRTGRAHTGILDHVMVEYYGNPTNLTQVANVTLIDARTIGVQPFEKKMVAVVEKAIRDADLGLNPATQGEMIRVPTPPLTEERRKEMVKLVKSEAEDAKIAIRNIRRDANETLKKLLKDKACSEDDERRAQDEIQKLTDKFVLEVDKLVVEKEKEVLTV.

This sequence belongs to the RRF family.

Its subcellular location is the cytoplasm. Responsible for the release of ribosomes from messenger RNA at the termination of protein biosynthesis. May increase the efficiency of translation by recycling ribosomes from one round of translation to another. This Herminiimonas arsenicoxydans protein is Ribosome-recycling factor.